The following is a 59-amino-acid chain: MEAMKMRLFVAVLVAAMAFSAVQQAAAVEAPAPSPTSDASLAIPAFFASVATLAFGFLF.

The signal sequence occupies residues 1–27; sequence MEAMKMRLFVAVLVAAMAFSAVQQAAA. A 4-hydroxyproline mark is found at Pro31, Pro33, and Pro35. Residues Pro31, Pro33, and Pro35 are each glycosylated (O-linked (Ara...) hydroxyproline). Ser37 is lipidated: GPI-anchor amidated serine. Positions 38–59 are cleaved as a propeptide — removed in mature form; it reads DASLAIPAFFASVATLAFGFLF.

This sequence belongs to the AG-peptide AGP family. Contains 4-hydroxyproline; hydroxylated on Pro-31, Pro-33 and Pro-35. In terms of processing, O-glycosylated on hydroxyprolines; noncontiguous hydroxylproline residues are glycosylated with arabinogalactan.

It is found in the cell membrane. Functionally, proteoglycan that seems to be implicated in diverse developmental roles such as differentiation, cell-cell recognition, embryogenesis and programmed cell death. The chain is Arabinogalactan protein 13 from Arabidopsis thaliana (Mouse-ear cress).